The chain runs to 427 residues: Glutamate-1-semialdehyde 2,1-aminomutase (427 aa).

Lysine 265 carries the post-translational modification N6-(pyridoxal phosphate)lysine.

The protein belongs to the class-III pyridoxal-phosphate-dependent aminotransferase family. HemL subfamily. Homodimer. The cofactor is pyridoxal 5'-phosphate.

Its subcellular location is the cytoplasm. The catalysed reaction is (S)-4-amino-5-oxopentanoate = 5-aminolevulinate. It functions in the pathway porphyrin-containing compound metabolism; protoporphyrin-IX biosynthesis; 5-aminolevulinate from L-glutamyl-tRNA(Glu): step 2/2. The protein is Glutamate-1-semialdehyde 2,1-aminomutase of Stutzerimonas stutzeri (strain A1501) (Pseudomonas stutzeri).